The following is a 279-amino-acid chain: Diaminopimelate epimerase (279 aa).

The substrate site is built by asparagine 12, glutamine 45, and asparagine 65. Cysteine 74 functions as the Proton donor in the catalytic mechanism. Substrate-binding positions include 75 to 76, asparagine 162, asparagine 195, and 213 to 214; these read GN and ER. Cysteine 222 serves as the catalytic Proton acceptor. 223–224 provides a ligand contact to substrate; that stretch reads GT.

The protein belongs to the diaminopimelate epimerase family. Homodimer.

The protein resides in the cytoplasm. The enzyme catalyses (2S,6S)-2,6-diaminopimelate = meso-2,6-diaminopimelate. The protein operates within amino-acid biosynthesis; L-lysine biosynthesis via DAP pathway; DL-2,6-diaminopimelate from LL-2,6-diaminopimelate: step 1/1. Its function is as follows. Catalyzes the stereoinversion of LL-2,6-diaminopimelate (L,L-DAP) to meso-diaminopimelate (meso-DAP), a precursor of L-lysine and an essential component of the bacterial peptidoglycan. The chain is Diaminopimelate epimerase from Shewanella woodyi (strain ATCC 51908 / MS32).